The following is a 168-amino-acid chain: Small ribosomal subunit protein uS9 (168 aa).

The segment covering 1–29 (MAQNEELTAEAVEAEETLTSYTSESTSAE) has biased composition (low complexity). Residues 1–36 (MAQNEELTAEAVEAEETLTSYTSESTSAEDAPKKER) form a disordered region.

The protein belongs to the universal ribosomal protein uS9 family.

This is Small ribosomal subunit protein uS9 from Paenarthrobacter aurescens (strain TC1).